The chain runs to 424 residues: Gamma-glutamyl phosphate reductase (424 aa).

It belongs to the gamma-glutamyl phosphate reductase family.

Its subcellular location is the cytoplasm. It catalyses the reaction L-glutamate 5-semialdehyde + phosphate + NADP(+) = L-glutamyl 5-phosphate + NADPH + H(+). Its pathway is amino-acid biosynthesis; L-proline biosynthesis; L-glutamate 5-semialdehyde from L-glutamate: step 2/2. Its function is as follows. Catalyzes the NADPH-dependent reduction of L-glutamate 5-phosphate into L-glutamate 5-semialdehyde and phosphate. The product spontaneously undergoes cyclization to form 1-pyrroline-5-carboxylate. This chain is Gamma-glutamyl phosphate reductase, found in Dehalococcoides mccartyi (strain ATCC BAA-2100 / JCM 16839 / KCTC 5957 / BAV1).